The primary structure comprises 499 residues: Thermostable carboxypeptidase 1 (499 aa).

One can recognise a Peptidase M32 domain in the interval 6–499; it reads QNETIKQILA…FVRWVKEKYL (494 aa). Residues 238-240 carry the HPF motif; that stretch reads HPF. A DXRXT motif is present at residues 248 to 252; it reads DVRIT. His-269 provides a ligand contact to Co(2+). The HEXXH signature appears at 269-273; the sequence is HEFGH. Glu-270 (proton donor/acceptor) is an active-site residue. Residues His-273 and Glu-299 each coordinate Co(2+). The HES/GQ signature appears at 298-301; the sequence is HESQ. Residues 350–355 carry the I/NRXXA/SD motif; the sequence is IRTEAD. A GXXQDXHW motif is present at residues 405–412; that stretch reads GILQDIHW.

Belongs to the peptidase M32 family. In terms of assembly, homodimer. Requires Co(2+) as cofactor. Mn(2+) is required as a cofactor.

The catalysed reaction is Release of a C-terminal amino acid with broad specificity, except for -Pro.. With respect to regulation, EDTA and DTT reversibly abolish carboxypeptidase activity. Its function is as follows. Broad specificity carboxypetidase that releases amino acids sequentially from the C-terminus, including neutral, aromatic, polar and basic residues, but not Pro, Gly, Asp and Glu. This is Thermostable carboxypeptidase 1 from Pyrococcus furiosus (strain ATCC 43587 / DSM 3638 / JCM 8422 / Vc1).